We begin with the raw amino-acid sequence, 52 residues long: ATP synthase protein 8 (52 aa).

The helical transmembrane segment at Pro-6–Leu-26 threads the bilayer.

Belongs to the ATPase protein 8 family. In terms of assembly, F-type ATPases have 2 components, CF(1) - the catalytic core - and CF(0) - the membrane proton channel.

The protein localises to the mitochondrion membrane. Mitochondrial membrane ATP synthase (F(1)F(0) ATP synthase or Complex V) produces ATP from ADP in the presence of a proton gradient across the membrane which is generated by electron transport complexes of the respiratory chain. F-type ATPases consist of two structural domains, F(1) - containing the extramembraneous catalytic core and F(0) - containing the membrane proton channel, linked together by a central stalk and a peripheral stalk. During catalysis, ATP synthesis in the catalytic domain of F(1) is coupled via a rotary mechanism of the central stalk subunits to proton translocation. Part of the complex F(0) domain. Minor subunit located with subunit a in the membrane. In Penaeus monodon (Giant tiger prawn), this protein is ATP synthase protein 8 (MT-ATP8).